The following is a 1464-amino-acid chain: ABC transporter G family member 35 (1464 aa).

A disordered region spans residues 1 to 26 (MDAAAEMQKVVSLRRGGGGSSSRGAA). The ABC transporter 1 domain occupies 173–446 (ANALGILPNK…FELMGFKCPE (274 aa)). An ATP-binding site is contributed by 206 to 213 (GPPGSGKT). In terms of domain architecture, ABC transmembrane type-2 1 spans 524–737 (ELLKANIDRE…AQNAISVNEF (214 aa)). Helical transmembrane passes span 542–562 (FVYI…MTVF), 575–595 (GVIF…NGLS), 630–650 (IPMS…VIGF), 662–682 (LLML…GGAA), 686–706 (IVAN…GGFI), 715–735 (WWIW…ISVN), and 774–794 (IGFG…TLAL). The region spanning 867–1119 (LTFDNIKYSV…ELIKYFEGIK (253 aa)) is the ABC transporter 2 domain. Residue 912–919 (GVSGAGKT) participates in ATP binding. The ABC transmembrane type-2 2 domain maps to 1192–1406 (NQCLACLWKM…TLYGLVASQF (215 aa)). Helical transmembrane passes span 1213-1233 (AIRL…FWDL), 1243-1263 (LFNA…LNSQ), 1299-1319 (FPYT…MIGF), 1326-1346 (FFWY…YGMM), 1356-1376 (VASI…GFII), 1387-1407 (WYCW…SQFG), and 1436-1456 (VVAV…GFAI).

It belongs to the ABC transporter superfamily. ABCG family. PDR (TC 3.A.1.205) subfamily.

It localises to the membrane. Its function is as follows. May be a general defense protein. The sequence is that of ABC transporter G family member 35 from Oryza sativa subsp. japonica (Rice).